The chain runs to 267 residues: Luciferase (267 aa).

An N-linked (GlcNAc...) asparagine glycan is attached at Asn4. Residues 17-39 form a helical membrane-spanning segment; sequence LSSRSIAITCGVVLASAIAFPII.

It belongs to the fungal luciferase family.

Its subcellular location is the membrane. The enzyme catalyses 3-hydroxyhispidin + O2 = (E)-caffeoylpyruvate + hnu + CO2. It carries out the reaction 3-hydroxyhispidin + O2 = 4-[(E)-2-(3,4-dihydroxyphenyl)ethenyl]-1,7-dihydroxy-2,3,5-trioxabicyclo[2.2.2]oct-7-en-6-one. Its function is as follows. Luciferase; part of the gene cluster that mediates the fungal bioluminescence cycle. Uses the fungal luciferin 3-hydroxyhispidin as a substrate to produce an endoperoxide as a high-energy intermediate with decomposition that yields oxyluciferin (also known as caffeoylpyruvate) and light emission. The fungal bioluminescence cycle begins with the hispidin synthetase that catalyzes the formation of hispidin which is further hydroxylated by the hispidin-3-hydroxylase, yielding the fungal luciferin 3-hydroxyhispidin. The luciferase then produces an endoperoxide as a high-energy intermediate with decomposition that yields oxyluciferin and light emission. Oxyluciferin can be recycled to caffeic acid by caffeoylpyruvate hydrolase. The sequence is that of Luciferase from Neonothopanus nambi (Agaricus nambi).